The primary structure comprises 64 residues: Conotoxin Pn-B01121 (64 aa).

An N-terminal signal peptide occupies residues 1–22; the sequence is MCCLPVFVILLLLIASAPSVDA. A propeptide spanning residues 23–48 is cleaved from the precursor; sequence LPKTKDDMSLASFHDNAKRTLQILSN. At Trp63 the chain carries Tryptophan amide.

Belongs to the conotoxin T superfamily. Contains 2 disulfide bonds that can be either 'C1-C3, C2-C4' or 'C1-C4, C2-C3', since these disulfide connectivities have been observed for conotoxins with cysteine framework V (for examples, see AC P0DQQ7 and AC P81755). In terms of tissue distribution, expressed by the venom duct.

The protein resides in the secreted. This is Conotoxin Pn-B01121 from Conus pennaceus (Feathered cone).